The following is a 585-amino-acid chain: Glutamate decarboxylase 2 (585 aa).

Residues 1–24 form a disordered region; that stretch reads MASPGSGFWSFGSEDGSGDPENSG. Phosphoserine occurs at positions 3, 6, 10, and 13. S-palmitoyl cysteine attachment occurs at residues Cys30 and Cys45. Residue 181-183 participates in substrate binding; sequence QLS. The residue at position 396 (Lys396) is an N6-(pyridoxal phosphate)lysine. Residue Arg558 coordinates substrate.

This sequence belongs to the group II decarboxylase family. In terms of assembly, homodimer. It depends on pyridoxal 5'-phosphate as a cofactor. Post-translationally, phosphorylated; which does not affect kinetic parameters or subcellular location. Palmitoylated; which is required for presynaptic clustering.

It is found in the cytoplasm. Its subcellular location is the cytosol. It localises to the cytoplasmic vesicle. The protein resides in the presynaptic cell membrane. The protein localises to the golgi apparatus membrane. The enzyme catalyses L-glutamate + H(+) = 4-aminobutanoate + CO2. Its function is as follows. Catalyzes the production of GABA. The polypeptide is Glutamate decarboxylase 2 (GAD2) (Sus scrofa (Pig)).